The sequence spans 537 residues: Cytochrome P450 monooxygenase AOL_s00215g282 (537 aa).

Residues 9–29 traverse the membrane as a helical segment; the sequence is ATVVLCGSIVTVSIAYVIFVV. Asn126 carries N-linked (GlcNAc...) asparagine glycosylation. A heme-binding site is contributed by Cys451.

Belongs to the cytochrome P450 family. The cofactor is heme.

It is found in the membrane. It participates in secondary metabolite biosynthesis; terpenoid biosynthesis. In terms of biological role, cytochrome P450 monooxygenase; part of the gene cluster that mediates the biosynthesis of sesquiterpenyl epoxy-cyclohexenoids (SECs) such as anthrobotrisins and arthrosporols, metabolites that possess a novel hybrid carbon skeleton consisting of a polyketide-derived epoxycyclohexenol combined with a terpenoid-derived monocyclic sesquiterpenol substructure (PKS-PTS hybrid). The SEC pathway plays an important role for fungal soil colonization via decreasing fungal nematode-capturing ability. Within the pathway, the cytochrome P450 monooxygenase AOL_s00215g282 acts as a m-cresol hydrolase that converts m-cresol to toluquinol. The pathway begins with the biosynthesis of 6-methylsalicylic acid (6-MSA), the first precursor of the polyketide-derived epoxycyclohexenol in arthrosporols, by the polyketide synthase (PKS) AOL_s00215g283 via condensation of 1 acetate and 3 malonate units. The 6-methylsalicylic acid decarboxylase AOL_s00215g281 then catalyzes the decarboxylation of 6-methylsalicylic acid to yield m-cresol. The cytochrome P450 monooxygenase AOL_s00215g282 further oxidizes m-cresol to yield toluquinol. With the assistance of the oxidoreductase AOL_s00215g277, the polyprenyl transferase AOL_s00215g276 catalyzes the farnesylation of toluquinol to produce farnesyl hydroquinone, the hybrid precursor for biosynthesis of SECs. Farnesyl hydroquinone undergoes epoxidation and then subsequent dehydrogenation to form farnesyl epoxy-quinone, the first and simplest SEC. The cytochrome P450 monooxygenase AOL_s00215g278 and the FAD-dependent monooxygenase AOL_s00215g279 might be involved in the oxygenation of the phenol moiety, most likely in the epoxy formation. The cytochrome P450 monooxygenases AOL_s00215g274 and AOL_s00215g280 are involved in specific regional ketone reductions at respectively C-4 and C-1 of farnesyl epoxy-quinone PubMed:33823587. This Arthrobotrys oligospora (strain ATCC 24927 / CBS 115.81 / DSM 1491) (Nematode-trapping fungus) protein is Cytochrome P450 monooxygenase AOL_s00215g282.